A 442-amino-acid chain; its full sequence is Putative arsenical pump membrane protein (442 aa).

Helical transmembrane passes span 22–42, 56–76, 85–105, 107–127, 136–156, 174–194, 250–270, 294–314, 328–347, 378–398, and 419–439; these read IPAT…LADL, ILAT…YWVA, GSGI…TIFL, NDGS…YLGL, LLSG…SNIV, MMFV…FMFF, LFAA…GSFI, IFIF…IGFT, SLAH…SNLF, IIGS…TLIW, and IIII…WISW.

This sequence belongs to the ArsB family.

The protein resides in the cell membrane. The polypeptide is Putative arsenical pump membrane protein (ywrK) (Bacillus subtilis (strain 168)).